Here is a 536-residue protein sequence, read N- to C-terminus: Membrane protein insertase YidC (536 aa).

The next 5 membrane-spanning stretches (helical) occupy residues phenylalanine 7–serine 27, leucine 338–phenylalanine 358, leucine 419–valine 439, leucine 453–isoleucine 473, and proline 494–valine 514.

It belongs to the OXA1/ALB3/YidC family. Type 1 subfamily. In terms of assembly, interacts with the Sec translocase complex via SecD. Specifically interacts with transmembrane segments of nascent integral membrane proteins during membrane integration.

The protein resides in the cell membrane. Functionally, required for the insertion and/or proper folding and/or complex formation of integral membrane proteins into the membrane. Involved in integration of membrane proteins that insert both dependently and independently of the Sec translocase complex, as well as at least some lipoproteins. Aids folding of multispanning membrane proteins. This Buchnera aphidicola subsp. Schizaphis graminum (strain Sg) protein is Membrane protein insertase YidC.